We begin with the raw amino-acid sequence, 165 residues long: 6,7-dimethyl-8-ribityllumazine synthase (165 aa).

5-amino-6-(D-ribitylamino)uracil contacts are provided by residues Trp-26, 57–59, and 79–81; these read SVE and VVV. Residue 84 to 85 participates in (2S)-2-hydroxy-3-oxobutyl phosphate binding; the sequence is AT. The active-site Proton donor is the His-87. His-112 serves as a coordination point for 5-amino-6-(D-ribitylamino)uracil. Arg-126 contributes to the (2S)-2-hydroxy-3-oxobutyl phosphate binding site.

This sequence belongs to the DMRL synthase family.

It carries out the reaction (2S)-2-hydroxy-3-oxobutyl phosphate + 5-amino-6-(D-ribitylamino)uracil = 6,7-dimethyl-8-(1-D-ribityl)lumazine + phosphate + 2 H2O + H(+). It participates in cofactor biosynthesis; riboflavin biosynthesis; riboflavin from 2-hydroxy-3-oxobutyl phosphate and 5-amino-6-(D-ribitylamino)uracil: step 1/2. Catalyzes the formation of 6,7-dimethyl-8-ribityllumazine by condensation of 5-amino-6-(D-ribitylamino)uracil with 3,4-dihydroxy-2-butanone 4-phosphate. This is the penultimate step in the biosynthesis of riboflavin. In Salinispora arenicola (strain CNS-205), this protein is 6,7-dimethyl-8-ribityllumazine synthase.